The chain runs to 100 residues: Phosphoribosylformylglycinamidine synthase subunit PurS (100 aa).

It belongs to the PurS family. In terms of assembly, homodimer. Part of the FGAM synthase complex composed of 1 PurL, 1 PurQ and 2 PurS subunits.

The protein resides in the cytoplasm. It carries out the reaction N(2)-formyl-N(1)-(5-phospho-beta-D-ribosyl)glycinamide + L-glutamine + ATP + H2O = 2-formamido-N(1)-(5-O-phospho-beta-D-ribosyl)acetamidine + L-glutamate + ADP + phosphate + H(+). Its pathway is purine metabolism; IMP biosynthesis via de novo pathway; 5-amino-1-(5-phospho-D-ribosyl)imidazole from N(2)-formyl-N(1)-(5-phospho-D-ribosyl)glycinamide: step 1/2. Part of the phosphoribosylformylglycinamidine synthase complex involved in the purines biosynthetic pathway. Catalyzes the ATP-dependent conversion of formylglycinamide ribonucleotide (FGAR) and glutamine to yield formylglycinamidine ribonucleotide (FGAM) and glutamate. The FGAM synthase complex is composed of three subunits. PurQ produces an ammonia molecule by converting glutamine to glutamate. PurL transfers the ammonia molecule to FGAR to form FGAM in an ATP-dependent manner. PurS interacts with PurQ and PurL and is thought to assist in the transfer of the ammonia molecule from PurQ to PurL. This Synechocystis sp. (strain ATCC 27184 / PCC 6803 / Kazusa) protein is Phosphoribosylformylglycinamidine synthase subunit PurS.